The chain runs to 152 residues: Small ribosomal subunit protein uS8m (152 aa).

Belongs to the universal ribosomal protein uS8 family.

It is found in the mitochondrion. In Marchantia polymorpha (Common liverwort), this protein is Small ribosomal subunit protein uS8m (RPS8).